Reading from the N-terminus, the 337-residue chain is tRNA pseudouridine synthase D (337 aa).

The Nucleophile role is filled by D77. In terms of domain architecture, TRUD spans 152–308; it reads GFPNYFTEQR…ARDFHWEFVE (157 aa).

The protein belongs to the pseudouridine synthase TruD family.

It catalyses the reaction uridine(13) in tRNA = pseudouridine(13) in tRNA. Responsible for synthesis of pseudouridine from uracil-13 in transfer RNAs. The polypeptide is tRNA pseudouridine synthase D (Mannheimia succiniciproducens (strain KCTC 0769BP / MBEL55E)).